Consider the following 350-residue polypeptide: Probable poly-beta-1,6-N-acetyl-D-glucosamine export protein (350 aa).

The next 10 helical transmembrane spans lie at leucine 8–isoleucine 28, leucine 40–leucine 60, tyrosine 83–threonine 103, glutamine 119–phenylalanine 139, phenylalanine 146–phenylalanine 166, leucine 182–glycine 202, leucine 216–glycine 236, isoleucine 254–isoleucine 274, methionine 276–phenylalanine 296, and valine 308–leucine 328.

This sequence belongs to the acyltransferase 3 family.

Its subcellular location is the cell membrane. Presumably involved in the export of the biofilm adhesin polysaccharide poly-beta-1,6-N-acetyl-D-glucosamine (PNAG, also referred to as PIA) across the cell membrane. The chain is Probable poly-beta-1,6-N-acetyl-D-glucosamine export protein (icaC) from Staphylococcus aureus (strain NCTC 8325 / PS 47).